The sequence spans 57 residues: Granulin-2 (57 aa).

Intrachain disulfides connect Cys4/Cys16 and Cys10/Cys26.

This sequence belongs to the granulin family. Granulins are disulfide bridged. In terms of tissue distribution, ubiquitous.

It localises to the secreted. In terms of biological role, granulins have possible cytokine-like activity. They may play a role in inflammation, wound repair, and tissue remodeling. This is Granulin-2 from Cyprinus carpio (Common carp).